The chain runs to 317 residues: tRNA dimethylallyltransferase (317 aa).

Residue 16–23 participates in ATP binding; sequence GPTASGKS. 18-23 serves as a coordination point for substrate; sequence TASGKS. Interaction with substrate tRNA stretches follow at residues 41–44, 165–169, and 247–252; these read DSAQ, QRIQR, and RCVGYR.

Belongs to the IPP transferase family. Monomer. The cofactor is Mg(2+).

It catalyses the reaction adenosine(37) in tRNA + dimethylallyl diphosphate = N(6)-dimethylallyladenosine(37) in tRNA + diphosphate. Catalyzes the transfer of a dimethylallyl group onto the adenine at position 37 in tRNAs that read codons beginning with uridine, leading to the formation of N6-(dimethylallyl)adenosine (i(6)A). This Nitrosomonas eutropha (strain DSM 101675 / C91 / Nm57) protein is tRNA dimethylallyltransferase.